The chain runs to 172 residues: Translation initiation factor IF-3 (172 aa).

The protein belongs to the IF-3 family. In terms of assembly, monomer.

It is found in the cytoplasm. IF-3 binds to the 30S ribosomal subunit and shifts the equilibrium between 70S ribosomes and their 50S and 30S subunits in favor of the free subunits, thus enhancing the availability of 30S subunits on which protein synthesis initiation begins. The protein is Translation initiation factor IF-3 of Oceanobacillus iheyensis (strain DSM 14371 / CIP 107618 / JCM 11309 / KCTC 3954 / HTE831).